Here is a 989-residue protein sequence, read N- to C-terminus: AP-2 complex subunit alpha-2 (989 aa).

HEAT repeat units lie at residues 112-149, 188-225, 368-402, and 403-440; these read EMLP…KEVA, VTPD…ENPI, IMIK…MCDK, and NTCK…KFAS. Residues 610-745 form a disordered region; sequence DNSNTTSNTA…SSSPISSGGS (136 aa). Positions 611–623 are enriched in low complexity; the sequence is NSNTTSNTANNSN. Positions 624 to 638 are enriched in polar residues; that stretch reads MINSQDSKISSGGFN. The segment covering 639-703 has biased composition (low complexity); that stretch reads QSPQPSQQQQ…QPVYQQQQQA (65 aa). The span at 704 to 714 shows a compositional bias: polar residues; that stretch reads ESFSPVQSDTV. The span at 715-745 shows a compositional bias: low complexity; it reads SSFGQQQQQQQGGFSSPTIQASSSPISSGGS.

The protein belongs to the adaptor complexes large subunit family. In terms of assembly, adaptor protein complex 2 (AP-2) is a heterotetramer composed of two large adaptins (alpha-type and beta-type subunits), a medium adaptin (mu-type subunit AP50) and a small adaptin (sigma-type subunit AP17).

Its subcellular location is the cell membrane. It localises to the membrane. The protein resides in the coated pit. In terms of biological role, component of the adaptor complexes which link clathrin to receptors in coated vesicles. Clathrin-associated protein complexes are believed to interact with the cytoplasmic tails of membrane proteins, leading to their selection and concentration. The protein is AP-2 complex subunit alpha-2 (ap2a1-1) of Dictyostelium discoideum (Social amoeba).